The following is a 529-amino-acid chain: VIN3-like protein 3 (529 aa).

A Nuclear localization signal motif is present at residues 97–104 (PKRQKRDL). The PHD-type zinc finger occupies 137-207 (RCSCCICFKY…CFNCVSCGKT (71 aa)). Residues 214 to 221 (LKKQLIIA) carry the Nuclear localization signal motif. The 100-residue stretch at 312–411 (GSMKIRIESV…FIVSTKTLQD (100 aa)) folds into the Fibronectin type-III domain. Residues 421-529 (MSNCNNANKM…AGVSLILLQD (109 aa)) are VIN3-Interacting Domain (VID).

As to quaternary structure, interacts with VIN3.

The protein localises to the nucleus. Involved in both the vernalization and photoperiod pathways by regulating gene expression. The sequence is that of VIN3-like protein 3 (VIL3) from Arabidopsis thaliana (Mouse-ear cress).